The following is a 180-amino-acid chain: Crossover junction endodeoxyribonuclease RuvC (180 aa).

Active-site residues include Asp-7, Glu-66, and Asp-138. Mg(2+) is bound by residues Asp-7, Glu-66, and Asp-138.

It belongs to the RuvC family. As to quaternary structure, homodimer which binds Holliday junction (HJ) DNA. The HJ becomes 2-fold symmetrical on binding to RuvC with unstacked arms; it has a different conformation from HJ DNA in complex with RuvA. In the full resolvosome a probable DNA-RuvA(4)-RuvB(12)-RuvC(2) complex forms which resolves the HJ. Requires Mg(2+) as cofactor.

It is found in the cytoplasm. It catalyses the reaction Endonucleolytic cleavage at a junction such as a reciprocal single-stranded crossover between two homologous DNA duplexes (Holliday junction).. Its function is as follows. The RuvA-RuvB-RuvC complex processes Holliday junction (HJ) DNA during genetic recombination and DNA repair. Endonuclease that resolves HJ intermediates. Cleaves cruciform DNA by making single-stranded nicks across the HJ at symmetrical positions within the homologous arms, yielding a 5'-phosphate and a 3'-hydroxyl group; requires a central core of homology in the junction. The consensus cleavage sequence is 5'-(A/T)TT(C/G)-3'. Cleavage occurs on the 3'-side of the TT dinucleotide at the point of strand exchange. HJ branch migration catalyzed by RuvA-RuvB allows RuvC to scan DNA until it finds its consensus sequence, where it cleaves and resolves the cruciform DNA. This chain is Crossover junction endodeoxyribonuclease RuvC, found in Burkholderia vietnamiensis (strain G4 / LMG 22486) (Burkholderia cepacia (strain R1808)).